The primary structure comprises 1448 residues: DNA primase TraC (1448 aa).

3 stretches are compositionally biased toward basic and acidic residues: residues 844 to 856 (ARVQEERVRRDPN), 863 to 872 (SAAKEARKTA), and 882 to 898 (DAQRRAAELERQERDRQ). Disordered stretches follow at residues 844-915 (ARVQ…INVP) and 952-982 (QGAATAAVEPRSAQPAPEAQGEAQKPAQQAQ). Over residues 964–982 (AQPAPEAQGEAQKPAQQAQ) the composition is skewed to low complexity. Positions 1237 to 1325 (PALVISEGYA…GKAIFPIFAP (89 aa)) constitute a Toprim domain. The disordered stretch occupies residues 1414–1448 (ISQVQRDEQQHQEQKHVEKKQQQIEQRPRRAARIG). Positions 1418 to 1441 (QRDEQQHQEQKHVEKKQQQIEQRP) are enriched in basic and acidic residues.

In terms of biological role, required for autonomous replication in E.coli. Transferred into the recipient cell during bacterial conjugation. Catalyzes the synthesis of short oligoribonucleotide primers with CpA or pCpA at their 5'-termini on a single-stranded template DNA. This chain is DNA primase TraC (traC), found in Escherichia coli.